A 427-amino-acid chain; its full sequence is Enolase (427 aa).

Gln-163 serves as a coordination point for (2R)-2-phosphoglycerate. The active-site Proton donor is the Glu-205. Positions 242, 285, and 312 each coordinate Mg(2+). Residues Lys-337, Arg-366, Ser-367, and Lys-388 each coordinate (2R)-2-phosphoglycerate. The Proton acceptor role is filled by Lys-337.

The protein belongs to the enolase family. Mg(2+) serves as cofactor.

Its subcellular location is the cytoplasm. The protein localises to the secreted. It is found in the cell surface. It catalyses the reaction (2R)-2-phosphoglycerate = phosphoenolpyruvate + H2O. It participates in carbohydrate degradation; glycolysis; pyruvate from D-glyceraldehyde 3-phosphate: step 4/5. Catalyzes the reversible conversion of 2-phosphoglycerate (2-PG) into phosphoenolpyruvate (PEP). It is essential for the degradation of carbohydrates via glycolysis. The sequence is that of Enolase from Polaromonas sp. (strain JS666 / ATCC BAA-500).